The chain runs to 382 residues: uncharacterized protein (382 aa).

Helical transmembrane passes span 14-34 (GLLLLTLAIAVLNTLVPLWLA), 45-65 (VVSSSYFTGNLVGTLLTGYVI), 79-99 (FIFAAGCAGLGLMIGFWSWLA), 102-122 (FVAGVGCAMIWVVVESALMCS), 131-151 (LLAAYMMVYYVGTFLGQLLVS), 157-177 (LMSVLPWVTGLTLAGILPLLF), 204-224 (LGVNGCIISGIVLGSLYGLMP), 235-255 (ASIGFWMAVLVSAGILGQWPI), 270-290 (VQVFVVILGSIAMLSQAAMAP), 291-311 (ALFILGAAGFTLYPVAMAWAC), 325-345 (ALLLSYTVGSLLGPSFTAMLM), and 348-368 (FSDNLLFIMIASVSFIYLLML).

It belongs to the major facilitator superfamily. YcaD (TC 2.A.1.26) family.

Its subcellular location is the cell inner membrane. This is an uncharacterized protein from Shigella sonnei (strain Ss046).